The sequence spans 66 residues: Sodium/potassium-transporting ATPase subunit gamma (66 aa).

A helical membrane pass occupies residues 29–46; sequence GGLIFAGLAFIVGLLILL.

This sequence belongs to the FXYD family. In terms of assembly, regulatory subunit of the sodium/potassium-transporting ATPase which is composed of a catalytic alpha subunit, an auxiliary non-catalytic beta subunit and an additional regulatory subunit. In terms of tissue distribution, expressed in the distal convoluted tubule in the kidney. Found on basolateral membranes of nephron epithelial cells.

Its subcellular location is the membrane. In terms of biological role, may be involved in forming the receptor site for cardiac glycoside binding or may modulate the transport function of the sodium ATPase. The protein is Sodium/potassium-transporting ATPase subunit gamma (FXYD2) of Homo sapiens (Human).